The chain runs to 316 residues: Pantothenate kinase (316 aa).

Residue 95-102 coordinates ATP; the sequence is GSVAVGKS.

This sequence belongs to the prokaryotic pantothenate kinase family.

The protein localises to the cytoplasm. The catalysed reaction is (R)-pantothenate + ATP = (R)-4'-phosphopantothenate + ADP + H(+). The protein operates within cofactor biosynthesis; coenzyme A biosynthesis; CoA from (R)-pantothenate: step 1/5. In Klebsiella pneumoniae (strain 342), this protein is Pantothenate kinase.